Here is a 191-residue protein sequence, read N- to C-terminus: GTP-binding protein CIN4 (191 aa).

GTP contacts are provided by residues 23–30 (GLDNSGKS), 69–73 (DIGGQ), and 131–134 (NKID).

Its function is as follows. Implicated in yeast microtubule function. The chain is GTP-binding protein CIN4 (CIN4) from Saccharomyces cerevisiae (strain ATCC 204508 / S288c) (Baker's yeast).